Reading from the N-terminus, the 650-residue chain is DNA gyrase subunit B (650 aa).

Positions 429 to 543 constitute a Toprim domain; that stretch reads NELFIVEGDS…AGYVYIAQPP (115 aa). Mg(2+) is bound by residues glutamate 435, aspartate 508, and aspartate 510.

It belongs to the type II topoisomerase GyrB family. In terms of assembly, heterotetramer, composed of two GyrA and two GyrB chains. In the heterotetramer, GyrA contains the active site tyrosine that forms a transient covalent intermediate with DNA, while GyrB binds cofactors and catalyzes ATP hydrolysis. Mg(2+) serves as cofactor. Mn(2+) is required as a cofactor. The cofactor is Ca(2+).

Its subcellular location is the cytoplasm. It catalyses the reaction ATP-dependent breakage, passage and rejoining of double-stranded DNA.. A type II topoisomerase that negatively supercoils closed circular double-stranded (ds) DNA in an ATP-dependent manner to modulate DNA topology and maintain chromosomes in an underwound state. Negative supercoiling favors strand separation, and DNA replication, transcription, recombination and repair, all of which involve strand separation. Also able to catalyze the interconversion of other topological isomers of dsDNA rings, including catenanes and knotted rings. Type II topoisomerases break and join 2 DNA strands simultaneously in an ATP-dependent manner. The sequence is that of DNA gyrase subunit B from Streptococcus pyogenes serotype M1.